Here is a 118-residue protein sequence, read N- to C-terminus: Large ribosomal subunit protein bL17 (118 aa).

It belongs to the bacterial ribosomal protein bL17 family. As to quaternary structure, part of the 50S ribosomal subunit. Contacts protein L32.

The protein is Large ribosomal subunit protein bL17 of Campylobacter fetus subsp. fetus (strain 82-40).